Reading from the N-terminus, the 142-residue chain is Large ribosomal subunit protein uL11 (142 aa).

It belongs to the universal ribosomal protein uL11 family. In terms of assembly, part of the ribosomal stalk of the 50S ribosomal subunit. Interacts with L10 and the large rRNA to form the base of the stalk. L10 forms an elongated spine to which L12 dimers bind in a sequential fashion forming a multimeric L10(L12)X complex. In terms of processing, one or more lysine residues are methylated.

In terms of biological role, forms part of the ribosomal stalk which helps the ribosome interact with GTP-bound translation factors. This is Large ribosomal subunit protein uL11 from Rhodopseudomonas palustris (strain HaA2).